A 272-amino-acid chain; its full sequence is D-aminoacyl-tRNA deacylase (272 aa).

This sequence belongs to the DtdA deacylase family. Monomer. Zn(2+) serves as cofactor.

The catalysed reaction is a D-aminoacyl-tRNA + H2O = a tRNA + a D-alpha-amino acid + H(+). The enzyme catalyses glycyl-tRNA(Ala) + H2O = tRNA(Ala) + glycine + H(+). D-aminoacyl-tRNA deacylase with broad substrate specificity. By recycling D-aminoacyl-tRNA to D-amino acids and free tRNA molecules, this enzyme counteracts the toxicity associated with the formation of D-aminoacyl-tRNA entities in vivo. The chain is D-aminoacyl-tRNA deacylase from Hyperthermus butylicus (strain DSM 5456 / JCM 9403 / PLM1-5).